The following is a 175-amino-acid chain: Protein tyrosine phosphatase PRL-1 (175 aa).

One can recognise a Tyrosine-protein phosphatase domain in the interval 15–172 (KPSRVLFHFL…YKRRHQGAGC (158 aa)). Cys-53 and Cys-114 are joined by a disulfide. Asp-76 (proton donor) is an active-site residue. Cys-114 functions as the Phosphocysteine intermediate in the catalytic mechanism. 116–120 (AGLGR) is a substrate binding site. Cys-172 is modified (cysteine methyl ester). A lipid anchor (S-farnesyl cysteine) is attached at Cys-172. Residues 173-175 (VIM) constitute a propeptide, removed in mature form.

This sequence belongs to the protein-tyrosine phosphatase family.

The protein resides in the cytoplasm. It localises to the mitochondrion matrix. It is found in the kinetoplast. Its subcellular location is the secreted. The protein localises to the extracellular exosome. It catalyses the reaction O-phospho-L-tyrosyl-[protein] + H2O = L-tyrosyl-[protein] + phosphate. Activated in a reduced environment which promotes the reduction of the disulfide bond between the regulatory Cys-53 and catalytic Cys-114 residues. Functionally, has protein tyrosine phosphatase activity and may act as a virulence factor to support intracellular survival in host macrophages. The chain is Protein tyrosine phosphatase PRL-1 from Leishmania major.